The chain runs to 76 residues: Conotoxin Vc6.9 (76 aa).

The signal sequence occupies residues 1 to 19 (MEKLTILLLVAAVLMSTQA). A propeptide spanning residues 20-41 (LMQEQRQKAKINLFSKRKPSAE) is cleaved from the precursor. Intrachain disulfides connect C49-C63, C56-C67, and C62-C72.

It belongs to the conotoxin O2 superfamily. Expressed by the venom duct.

The protein localises to the secreted. Its function is as follows. Inhibits voltage-gated ion channels. This is Conotoxin Vc6.9 from Conus victoriae (Queen Victoria cone).